The sequence spans 55 residues: Small polypeptide DEVIL 10 (55 aa).

Asn7 carries N-linked (GlcNAc...) asparagine glycosylation. The segment at Arg19–Asp50 is required for DVL/RTFL small polypeptide activity. Residues Arg32–Trp48 traverse the membrane as a helical segment.

It belongs to the DVL/RTFL small polypeptides family.

It localises to the cell membrane. Small polypeptide acting as a regulatory molecule which coordinates cellular responses required for differentiation, growth and development, probably by restricting polar cell proliferation in lateral organs and coordinating socket cell recruitment and differentiation at trichome sites. The protein is Small polypeptide DEVIL 10 of Arabidopsis thaliana (Mouse-ear cress).